A 299-amino-acid polypeptide reads, in one-letter code: Probable GTP 3',8-cyclase (299 aa).

The 226-residue stretch at 4 to 229 folds into the Radical SAM core domain; sequence LHNREIKSLR…MQNRKKYLVD (226 aa). R13 contributes to the GTP binding site. [4Fe-4S] cluster contacts are provided by C20 and C24. Residue Y26 participates in S-adenosyl-L-methionine binding. C27 is a binding site for [4Fe-4S] cluster. Residue K61 participates in GTP binding. G65 contacts S-adenosyl-L-methionine. GTP is bound at residue T94. Residue S118 participates in S-adenosyl-L-methionine binding. K154 contributes to the GTP binding site. [4Fe-4S] cluster is bound by residues C245 and C248. 250 to 252 provides a ligand contact to GTP; sequence RIR. C262 contributes to the [4Fe-4S] cluster binding site.

Belongs to the radical SAM superfamily. MoaA family. The cofactor is [4Fe-4S] cluster.

It carries out the reaction GTP + AH2 + S-adenosyl-L-methionine = (8S)-3',8-cyclo-7,8-dihydroguanosine 5'-triphosphate + 5'-deoxyadenosine + L-methionine + A + H(+). It participates in cofactor biosynthesis; molybdopterin biosynthesis. Catalyzes the cyclization of GTP to (8S)-3',8-cyclo-7,8-dihydroguanosine 5'-triphosphate. The sequence is that of Probable GTP 3',8-cyclase from Methanococcus aeolicus (strain ATCC BAA-1280 / DSM 17508 / OCM 812 / Nankai-3).